A 218-amino-acid polypeptide reads, in one-letter code: Imidazole glycerol phosphate synthase subunit HisH (218 aa).

Positions 12–218 constitute a Glutamine amidotransferase type-1 domain; sequence SIVVVDYGLG…RNFVDYCADQ (207 aa). The active-site Nucleophile is the cysteine 88. Catalysis depends on residues histidine 196 and glutamate 198.

In terms of assembly, heterodimer of HisH and HisF.

It is found in the cytoplasm. It carries out the reaction 5-[(5-phospho-1-deoxy-D-ribulos-1-ylimino)methylamino]-1-(5-phospho-beta-D-ribosyl)imidazole-4-carboxamide + L-glutamine = D-erythro-1-(imidazol-4-yl)glycerol 3-phosphate + 5-amino-1-(5-phospho-beta-D-ribosyl)imidazole-4-carboxamide + L-glutamate + H(+). It catalyses the reaction L-glutamine + H2O = L-glutamate + NH4(+). Its pathway is amino-acid biosynthesis; L-histidine biosynthesis; L-histidine from 5-phospho-alpha-D-ribose 1-diphosphate: step 5/9. Functionally, IGPS catalyzes the conversion of PRFAR and glutamine to IGP, AICAR and glutamate. The HisH subunit catalyzes the hydrolysis of glutamine to glutamate and ammonia as part of the synthesis of IGP and AICAR. The resulting ammonia molecule is channeled to the active site of HisF. This Halobacterium salinarum (strain ATCC 700922 / JCM 11081 / NRC-1) (Halobacterium halobium) protein is Imidazole glycerol phosphate synthase subunit HisH.